The following is a 570-amino-acid chain: Sulfite reductase [NADPH] hemoprotein beta-component (570 aa).

The [4Fe-4S] cluster site is built by Cys-434, Cys-440, Cys-479, and Cys-483. Position 483 (Cys-483) interacts with siroheme.

The protein belongs to the nitrite and sulfite reductase 4Fe-4S domain family. As to quaternary structure, alpha(8)-beta(8). The alpha component is a flavoprotein, the beta component is a hemoprotein. Siroheme serves as cofactor. The cofactor is [4Fe-4S] cluster.

The catalysed reaction is hydrogen sulfide + 3 NADP(+) + 3 H2O = sulfite + 3 NADPH + 4 H(+). It participates in sulfur metabolism; hydrogen sulfide biosynthesis; hydrogen sulfide from sulfite (NADPH route): step 1/1. Functionally, component of the sulfite reductase complex that catalyzes the 6-electron reduction of sulfite to sulfide. This is one of several activities required for the biosynthesis of L-cysteine from sulfate. In Escherichia coli O1:K1 / APEC, this protein is Sulfite reductase [NADPH] hemoprotein beta-component.